The following is a 335-amino-acid chain: Glycerol-3-phosphate dehydrogenase [NAD(P)+] (335 aa).

The NADPH site is built by Phe11, Arg31, and Lys107. The sn-glycerol 3-phosphate site is built by Lys107 and Gly135. Ala139 serves as a coordination point for NADPH. Sn-glycerol 3-phosphate is bound by residues Lys190, Asp245, Ser255, Arg256, and Asn257. The active-site Proton acceptor is the Lys190. Residue Arg256 coordinates NADPH. NADPH contacts are provided by Leu280 and Glu282.

This sequence belongs to the NAD-dependent glycerol-3-phosphate dehydrogenase family.

The protein resides in the cytoplasm. The catalysed reaction is sn-glycerol 3-phosphate + NAD(+) = dihydroxyacetone phosphate + NADH + H(+). It catalyses the reaction sn-glycerol 3-phosphate + NADP(+) = dihydroxyacetone phosphate + NADPH + H(+). It participates in membrane lipid metabolism; glycerophospholipid metabolism. Functionally, catalyzes the reduction of the glycolytic intermediate dihydroxyacetone phosphate (DHAP) to sn-glycerol 3-phosphate (G3P), the key precursor for phospholipid synthesis. The sequence is that of Glycerol-3-phosphate dehydrogenase [NAD(P)+] from Anaplasma marginale (strain St. Maries).